The primary structure comprises 64 residues: Large ribosomal subunit protein bL32 (64 aa).

Residues 1-64 (MAVQQNRKTR…APKHGDETEE (64 aa)) form a disordered region. Residues 7-16 (RKTRSKRGMR) show a composition bias toward basic residues.

Belongs to the bacterial ribosomal protein bL32 family.

The sequence is that of Large ribosomal subunit protein bL32 from Methylococcus capsulatus (strain ATCC 33009 / NCIMB 11132 / Bath).